The chain runs to 570 residues: Proline--tRNA ligase (570 aa).

The protein belongs to the class-II aminoacyl-tRNA synthetase family. ProS type 1 subfamily. Homodimer.

It is found in the cytoplasm. It carries out the reaction tRNA(Pro) + L-proline + ATP = L-prolyl-tRNA(Pro) + AMP + diphosphate. Catalyzes the attachment of proline to tRNA(Pro) in a two-step reaction: proline is first activated by ATP to form Pro-AMP and then transferred to the acceptor end of tRNA(Pro). As ProRS can inadvertently accommodate and process non-cognate amino acids such as alanine and cysteine, to avoid such errors it has two additional distinct editing activities against alanine. One activity is designated as 'pretransfer' editing and involves the tRNA(Pro)-independent hydrolysis of activated Ala-AMP. The other activity is designated 'posttransfer' editing and involves deacylation of mischarged Ala-tRNA(Pro). The misacylated Cys-tRNA(Pro) is not edited by ProRS. The protein is Proline--tRNA ligase of Clostridium beijerinckii (strain ATCC 51743 / NCIMB 8052) (Clostridium acetobutylicum).